We begin with the raw amino-acid sequence, 464 residues long: MMARRDPKSWAKRLVRAQTLQKQRRAPVGPRAPPPDEEDPRLKCKNCGAFGHTARSTRCPMKCWKAALVPATLGKKEGKENLKPWKPRVEANPGPLNKDKGEKEERPRQQDPQRKALLHMFSGKPPEKPLPNGKGSTESSDHLRVASGPMPVHTTSKRPRVDPVLADRSAAEMSGRGSVLASLSPLRKASLSSSSSLGPKERQTGAAADMPQPAVRHQGREPLLVVKPTHSSPEGGCREVPQAASKTHGLLQAARPQAQDKRPAVTSQPCPPAATHSLGLGSNLSFGPGAKRPAQAPIQACLKFPKKPRLGPFQIPESAIQGGELGAPGNLQPPPAATELGPSTSPQMGRRTPAQVPSVDWQPPHSTPCLPTAQACTMSHHSAASHDGAQPLRVLFRRLENGRWSSSLLAAPSFHSPEKPGAFLAQSPHVSEKSEAPCVRVPPSVLYEDLQVSSSSEDSDSDLE.

3 disordered regions span residues 1 to 42 (MMAR…DPRL), 70 to 387 (PATL…ASHD), and 415 to 437 (HSPEKPGAFLAQSPHVSEKSEAP). Basic and acidic residues-rich tracts occupy residues 74-89 (GKKEGKENLKPWKPRV) and 97-114 (NKDKGEKEERPRQQDPQR). The segment covering 180–197 (LASLSPLRKASLSSSSSL) has biased composition (low complexity).

Belongs to the FAM90 family.

The polypeptide is Protein FAM90A18 (Homo sapiens (Human)).